A 160-amino-acid chain; its full sequence is SPbeta prophage-derived uncharacterized protein YokE (160 aa).

This chain is SPbeta prophage-derived uncharacterized protein YokE (yokE), found in Bacillus subtilis (strain 168).